The sequence spans 118 residues: Large ribosomal subunit protein bL19 (118 aa).

The protein belongs to the bacterial ribosomal protein bL19 family.

In terms of biological role, this protein is located at the 30S-50S ribosomal subunit interface and may play a role in the structure and function of the aminoacyl-tRNA binding site. This Herpetosiphon aurantiacus (strain ATCC 23779 / DSM 785 / 114-95) protein is Large ribosomal subunit protein bL19.